Consider the following 186-residue polypeptide: Tumor necrosis factor, alpha-induced protein 8-like protein 2 B (186 aa).

This sequence belongs to the TNFAIP8 family. TNFAIP8L2 subfamily.

Its function is as follows. Acts as a negative regulator of innate and adaptive immunity by maintaining immune homeostasis. Negative regulator of Toll-like receptor and T-cell receptor function. Prevents hyperresponsiveness of the immune system and maintains immune homeostasis. Inhibits jun/ap1 and NF-kappa-B activation. Promotes Fas-induced apoptosis. The sequence is that of Tumor necrosis factor, alpha-induced protein 8-like protein 2 B (tnfaip8l2b) from Danio rerio (Zebrafish).